A 365-amino-acid polypeptide reads, in one-letter code: Sulfate/thiosulfate import ATP-binding protein CysA (365 aa).

An ABC transporter domain is found at 3 to 237 (IEIANIKKSF…PATRFVLEFM (235 aa)). 35-42 (GPSGSGKT) provides a ligand contact to ATP.

Belongs to the ABC transporter superfamily. Sulfate/tungstate importer (TC 3.A.1.6) family. The complex is composed of two ATP-binding proteins (CysA), two transmembrane proteins (CysT and CysW) and a solute-binding protein (CysP).

It is found in the cell inner membrane. It catalyses the reaction sulfate(out) + ATP + H2O = sulfate(in) + ADP + phosphate + H(+). It carries out the reaction thiosulfate(out) + ATP + H2O = thiosulfate(in) + ADP + phosphate + H(+). Functionally, part of the ABC transporter complex CysAWTP involved in sulfate/thiosulfate import. Responsible for energy coupling to the transport system. This Escherichia coli O6:H1 (strain CFT073 / ATCC 700928 / UPEC) protein is Sulfate/thiosulfate import ATP-binding protein CysA.